A 277-amino-acid chain; its full sequence is Purine nucleoside phosphorylase 2 (277 aa).

Phosphate contacts are provided by residues histidine 65, 85-87, and alanine 117; that span reads RGH. Glutamate 197 is a binding site for a purine D-ribonucleoside. Serine 216 provides a ligand contact to phosphate. Asparagine 239 is an a purine D-ribonucleoside binding site.

The protein belongs to the PNP/MTAP phosphorylase family. In terms of assembly, hexamer. Dimer of trimers.

The enzyme catalyses a purine D-ribonucleoside + phosphate = a purine nucleobase + alpha-D-ribose 1-phosphate. It participates in purine metabolism; xanthosine degradation. Its pathway is purine metabolism; purine nucleoside salvage. Rapidly inactivated by p-chloromercuriphenylsulfonic acid (p-CMB). Dithiothreitol incubation restores the activity. In terms of biological role, the purine nucleoside phosphorylases catalyze the phosphorolytic breakdown of the N-glycosidic bond in the beta-(deoxy)ribonucleoside molecules, with the formation of the corresponding free purine bases and pentose-1-phosphate. This protein can degrade all purine nucleosides including xanthosine, inosine and guanosine, but cannot cleave adenosine, deoxyadenosine or hypoxanthine arabinoside. Has a preference for the neutral over the monoanionic form of xanthosine. This chain is Purine nucleoside phosphorylase 2 (xapA), found in Escherichia coli (strain K12).